A 249-amino-acid chain; its full sequence is Coproheme decarboxylase (249 aa).

Fe-coproporphyrin III-binding positions include arginine 131, 145-149, histidine 172, and glutamine 185; that span reads YPMNK. Tyrosine 145 is a catalytic residue.

This sequence belongs to the ChdC family. Type 1 subfamily. Fe-coproporphyrin III serves as cofactor.

The enzyme catalyses Fe-coproporphyrin III + 2 H2O2 + 2 H(+) = heme b + 2 CO2 + 4 H2O. The catalysed reaction is Fe-coproporphyrin III + H2O2 + H(+) = harderoheme III + CO2 + 2 H2O. It catalyses the reaction harderoheme III + H2O2 + H(+) = heme b + CO2 + 2 H2O. The protein operates within porphyrin-containing compound metabolism; protoheme biosynthesis. Functionally, involved in coproporphyrin-dependent heme b biosynthesis. Catalyzes the decarboxylation of Fe-coproporphyrin III (coproheme) to heme b (protoheme IX), the last step of the pathway. The reaction occurs in a stepwise manner with a three-propionate intermediate. This Staphylococcus carnosus (strain TM300) protein is Coproheme decarboxylase.